Here is a 398-residue protein sequence, read N- to C-terminus: Acetate kinase 2 (398 aa).

N7 serves as a coordination point for Mg(2+). K14 lines the ATP pocket. R91 contributes to the substrate binding site. The active-site Proton donor/acceptor is D148. ATP-binding positions include 208–212 (HLGNG), 283–285 (DFR), and 331–335 (GVGEN). Mg(2+) is bound at residue E384.

This sequence belongs to the acetokinase family. In terms of assembly, homodimer. Mg(2+) serves as cofactor. Requires Mn(2+) as cofactor.

It localises to the cytoplasm. The catalysed reaction is acetate + ATP = acetyl phosphate + ADP. It functions in the pathway metabolic intermediate biosynthesis; acetyl-CoA biosynthesis; acetyl-CoA from acetate: step 1/2. In terms of biological role, catalyzes the formation of acetyl phosphate from acetate and ATP. Can also catalyze the reverse reaction. The polypeptide is Acetate kinase 2 (Clostridium perfringens (strain 13 / Type A)).